The sequence spans 266 residues: DNA repair protein RecO (266 aa).

It belongs to the RecO family.

Involved in DNA repair and RecF pathway recombination. The sequence is that of DNA repair protein RecO from Synechococcus elongatus (strain ATCC 33912 / PCC 7942 / FACHB-805) (Anacystis nidulans R2).